Here is a 225-residue protein sequence, read N- to C-terminus: Ureidoacrylate amidohydrolase RutB (225 aa).

The active-site Proton acceptor is aspartate 22. The active site involves lysine 131. Cysteine 164 acts as the Nucleophile in catalysis.

It belongs to the isochorismatase family. RutB subfamily.

It carries out the reaction (Z)-3-ureidoacrylate + H2O + H(+) = (Z)-3-aminoacrylate + NH4(+) + CO2. The catalysed reaction is (Z)-3-ureidoacrylate + H2O = (Z)-3-aminoacrylate + carbamate + H(+). It catalyses the reaction (Z)-2-methylureidoacrylate + H2O + H(+) = (Z)-2-methylaminoacrylate + NH4(+) + CO2. Its function is as follows. Hydrolyzes ureidoacrylate to form aminoacrylate and carbamate. The carbamate hydrolyzes spontaneously, thereby releasing one of the nitrogen atoms of the pyrimidine ring as ammonia and one of its carbon atoms as CO2. The chain is Ureidoacrylate amidohydrolase RutB from Caulobacter vibrioides (strain ATCC 19089 / CIP 103742 / CB 15) (Caulobacter crescentus).